We begin with the raw amino-acid sequence, 492 residues long: Beclin 1-associated autophagy-related key regulator (492 aa).

A Phosphoserine modification is found at S29. Residues 43–58 are cysteine repeats; that stretch reads CPLCNTTRRRLTCAKC. The stretch at 71–180 forms a coiled coil; it reads DRERFIDKKE…KLGDLVEKKT (110 aa). The interval 410-473 is disordered; the sequence is PGVAGESDES…PIASSSAGGM (64 aa). The interval 413 to 492 is BATS; it reads AGESDESGDE…SWFKAYTGHR (80 aa). The segment covering 415-433 has biased composition (acidic residues); the sequence is ESDESGDERVSDEETDLGT. At S416 the chain carries Phosphoserine. Residue T429 is modified to Phosphothreonine. Residues 448-473 show a composition bias toward low complexity; it reads SQSVEVSQSQSTQASPPIASSSAGGM.

The protein belongs to the ATG14 family. In terms of assembly, forms homooligomers; homo-oligomerization is essential for the roles in membrane tethering and enhancement of SNARE-mediated fusion. Component of the PI3K (PI3KC3/PI3K-III/class III phosphatidylinositol 3-kinase) complex I (PI3KC3-C1) in which the core composed of the catalytic subunit PIK3C3, the regulatory subunit PIK3R4 and BECN1 is associated with ATG14. PI3KC3-C1 displays a V-shaped architecture with PIK3R4 serving as a bridge between PIK3C3 and the ATG14:BECN1 subcomplex. PI3KC3-C1 can associate with further regulatory subunits. Interacts with PIK3CB. Interacts (via coiled-coil domain) with BECN2 (via coiled-coil domain); this interaction is tighter than BECN2 self-association. Interacts with the STX17-SNAP29 binary t-SNARE complex. Interacts with NRBF2. Interacts with PIK3C3 and BECN1; this interaction is increased in the absence of TMEM39A. Interacts with STEEP1; the interaction is required for trafficking of STING1 from the endoplasmic reticulum. Interacts with ARMC3 (via ARM domains). Ubiquitinated via 'Lys-6', 'Lys-11' and 'Lys-63'-linked polyubiquitin chains on multiple lysines by MARCHF7, leading to ATG14 aggregation and loss of interaction with STX17.

It is found in the cytoplasm. Its subcellular location is the endoplasmic reticulum membrane. It localises to the preautophagosomal structure membrane. The protein resides in the cytoplasmic vesicle. The protein localises to the autophagosome membrane. In terms of biological role, required for both basal and inducible autophagy. Determines the localization of the autophagy-specific PI3-kinase complex PI3KC3-C1. Plays a role in autophagosome formation and MAP1LC3/LC3 conjugation to phosphatidylethanolamine. Promotes BECN1 translocation from the trans-Golgi network to autophagosomes. Enhances PIK3C3 activity in a BECN1-dependent manner. Essential for the autophagy-dependent phosphorylation of BECN1. Stimulates the phosphorylation of BECN1, but suppresses the phosphorylation PIK3C3 by AMPK. Binds to STX17-SNAP29 binary t-SNARE complex on autophagosomes and primes it for VAMP8 interaction to promote autophagosome-endolysosome fusion. Modulates the hepatic lipid metabolism. The protein is Beclin 1-associated autophagy-related key regulator of Homo sapiens (Human).